Reading from the N-terminus, the 466-residue chain is MTYAPVTDVLSGKLAVDSEVTVRGWIRSRRDSKAGISFLAVYDGSCFDPIQAVVPNDLNNYNDEVLKLTTGCSVEVTGTIVASPAKGQDFELAATEVKVVGWVEDAETYPMAKTRHSIEYLREVAHLRPRTNVIGAVARVRNCLSQAIHRFYHEQGYFWMSAPLITASDAEGAGEMFRVSTLDHANLPLDDKGNVDYDKDFFGKETFLTVSGQLNAETYACALSKVYTFGPTFRAENSHTSRHLAEFWMVEPEVAFATLDDVAKLAEDMLKYVFEAVLAERRDDLEFFASRIDKQAITRLEQFVSSDFAQVDYTDAIQILKDSGRDFEFDVEWGIDMSSEHERYLAEEHFKAPVIVKNYPKDIKAFYMRQNDDGKTVAAMDVLAPGIGEIIGGSQREERLDILDARMIEMGIDPEHMSWYRDLRRYGTVPHAGFGLGFERLVSYVTGMGNVRDVIPFPRTPRSANF.

Belongs to the class-II aminoacyl-tRNA synthetase family. As to quaternary structure, homodimer.

It localises to the cytoplasm. The enzyme catalyses tRNA(Asn) + L-asparagine + ATP = L-asparaginyl-tRNA(Asn) + AMP + diphosphate + H(+). The polypeptide is Asparagine--tRNA ligase (Aliivibrio fischeri (strain ATCC 700601 / ES114) (Vibrio fischeri)).